The sequence spans 174 residues: Co-chaperone protein HscB homolog (174 aa).

The J domain maps to asparagine 2–leucine 74.

It belongs to the HscB family. In terms of assembly, interacts with HscA and stimulates its ATPase activity.

In terms of biological role, co-chaperone involved in the maturation of iron-sulfur cluster-containing proteins. Seems to help targeting proteins to be folded toward HscA. The sequence is that of Co-chaperone protein HscB homolog from Shewanella baltica (strain OS223).